The primary structure comprises 338 residues: Lipoate-protein ligase A (338 aa).

Positions 29–216 (PATQRVLFLW…AFFAHYGERV (188 aa)) constitute a BPL/LPL catalytic domain. ATP contacts are provided by residues arginine 71, 76 to 79 (GAVF), and lysine 134. Lysine 134 is a (R)-lipoate binding site.

Belongs to the LplA family. In terms of assembly, monomer.

It is found in the cytoplasm. It catalyses the reaction L-lysyl-[lipoyl-carrier protein] + (R)-lipoate + ATP = N(6)-[(R)-lipoyl]-L-lysyl-[lipoyl-carrier protein] + AMP + diphosphate + H(+). The protein operates within protein modification; protein lipoylation via exogenous pathway; protein N(6)-(lipoyl)lysine from lipoate: step 1/2. It participates in protein modification; protein lipoylation via exogenous pathway; protein N(6)-(lipoyl)lysine from lipoate: step 2/2. Functionally, catalyzes both the ATP-dependent activation of exogenously supplied lipoate to lipoyl-AMP and the transfer of the activated lipoyl onto the lipoyl domains of lipoate-dependent enzymes. The protein is Lipoate-protein ligase A of Escherichia fergusonii (strain ATCC 35469 / DSM 13698 / CCUG 18766 / IAM 14443 / JCM 21226 / LMG 7866 / NBRC 102419 / NCTC 12128 / CDC 0568-73).